An 894-amino-acid chain; its full sequence is RNA polymerase I-specific transcription initiation factor RRN6 (894 aa).

The segment at 803 to 894 is disordered; that stretch reads PPFNLNSQSQ…KKKKRIRGFG (92 aa). Composition is skewed to polar residues over residues 806–823, 832–849, and 863–880; these read NLNSQSQIPTIKSSQSSG, KTQSQKATPLSQSTQNLS, and QPPSSQISFVNDSQPRNS. Residues 881–894 are compositionally biased toward basic residues; that stretch reads QKAKKKKKRIRGFG.

Component of the core factor (CF) complex, which consists of RRN6, RRN7 and RRN11. The CF heterotrimer may further dimerize to form a hexamer. RRN6 interacts with RRN7, RRN11 and RRN9.

The protein localises to the cytoplasm. Its subcellular location is the nucleus. It localises to the nucleolus. In terms of biological role, acts as a component of the core factor (CF) complex which is essential for the initiation of rDNA transcription by RNA polymerase I. After binding of UAF (upstream activation factor) to an upstream element of the promoter, CF is recruited in a SPT15/TBP-dependent manner to form a preinitiation complex. The sequence is that of RNA polymerase I-specific transcription initiation factor RRN6 (RRN6) from Saccharomyces cerevisiae (strain ATCC 204508 / S288c) (Baker's yeast).